The chain runs to 397 residues: Phosphoglycerate kinase (397 aa).

Substrate contacts are provided by residues 21 to 23, Arg-37, 60 to 63, Arg-120, and Arg-153; these read DFN and HLGR. ATP contacts are provided by residues Lys-206, Gly-296, Glu-327, and 353–356; that span reads GGDS.

The protein belongs to the phosphoglycerate kinase family. In terms of assembly, monomer.

The protein localises to the cytoplasm. The catalysed reaction is (2R)-3-phosphoglycerate + ATP = (2R)-3-phospho-glyceroyl phosphate + ADP. It participates in carbohydrate degradation; glycolysis; pyruvate from D-glyceraldehyde 3-phosphate: step 2/5. This is Phosphoglycerate kinase from Rhodopirellula baltica (strain DSM 10527 / NCIMB 13988 / SH1).